Here is a 65-residue protein sequence, read N- to C-terminus: MKTIDLREKSVEELKALLDEQQLNQFRLRMAKATGQLGKSHEVQIARKTIARIKTLLTEKQGNGQ.

The protein belongs to the universal ribosomal protein uL29 family.

The sequence is that of Large ribosomal subunit protein uL29 from Acinetobacter baylyi (strain ATCC 33305 / BD413 / ADP1).